Reading from the N-terminus, the 214-residue chain is Cell division protein SepF (214 aa).

The disordered stretch occupies residues Glu25–Gly51.

Belongs to the SepF family. In terms of assembly, homodimer. Interacts with FtsZ.

It localises to the cytoplasm. Its function is as follows. Cell division protein that is part of the divisome complex and is recruited early to the Z-ring. Probably stimulates Z-ring formation, perhaps through the cross-linking of FtsZ protofilaments. Its function overlaps with FtsA. The polypeptide is Cell division protein SepF (Mycolicibacterium smegmatis (strain ATCC 700084 / mc(2)155) (Mycobacterium smegmatis)).